The chain runs to 260 residues: Phytolongin Phyl2.1 (260 aa).

The Longin domain maps to 12 to 114 (CIAKGTVILA…LDNPTQHCLQ (103 aa)). Residues 231–251 (WIVLMFDLCICLVLFGIWLWI) form a helical; Anchor for type IV membrane protein membrane-spanning segment.

Belongs to the synaptobrevin family.

The protein resides in the membrane. Functionally, non-SNARE longin protein involved in membrane-trafficking machinery. The polypeptide is Phytolongin Phyl2.1 (Arabidopsis thaliana (Mouse-ear cress)).